Reading from the N-terminus, the 423-residue chain is Cyclin-dependent kinase 14 (423 aa).

Positions 62–85 are disordered; sequence VGKESPKVRRHSSPSSPTSPKFGK. Residues 89 to 373 form the Protein kinase domain; the sequence is YEKLEKLGEG…AQAALNHDYF (285 aa). ATP contacts are provided by residues 95–103 and lysine 118; that span reads LGEGSYATV. Catalysis depends on aspartate 210, which acts as the Proton acceptor.

Belongs to the protein kinase superfamily. CMGC Ser/Thr protein kinase family. CDC2/CDKX subfamily. Interacts with ccny; ccny mediates its recruitment to the plasma membrane and promotes phosphorylation of lrp6.

Its subcellular location is the cell membrane. It carries out the reaction L-seryl-[protein] + ATP = O-phospho-L-seryl-[protein] + ADP + H(+). The enzyme catalyses L-threonyl-[protein] + ATP = O-phospho-L-threonyl-[protein] + ADP + H(+). Serine/threonine-protein kinase involved in the control of the eukaryotic cell cycle, whose activity is controlled by an associated cyclin. Acts as a cell-cycle regulator of Wnt signaling pathway during G2/M phase by mediating the phosphorylation of lrp6, leading to the activation of the Wnt signaling pathway. The sequence is that of Cyclin-dependent kinase 14 (cdk14) from Xenopus tropicalis (Western clawed frog).